The sequence spans 910 residues: DNA mismatch repair protein MutS (910 aa).

607–614 (GPNMAGKS) provides a ligand contact to ATP.

Belongs to the DNA mismatch repair MutS family.

In terms of biological role, this protein is involved in the repair of mismatches in DNA. It is possible that it carries out the mismatch recognition step. This protein has a weak ATPase activity. In Geobacillus thermodenitrificans (strain NG80-2), this protein is DNA mismatch repair protein MutS.